The following is a 92-amino-acid chain: Small ribosomal subunit protein bS20 (92 aa).

The disordered stretch occupies residues 1-23; sequence MANSPSAKKRAKQAEKRRSHNAS. The segment covering 7–20 has biased composition (basic residues); it reads AKKRAKQAEKRRSH.

This sequence belongs to the bacterial ribosomal protein bS20 family.

Functionally, binds directly to 16S ribosomal RNA. This chain is Small ribosomal subunit protein bS20, found in Ectopseudomonas mendocina (strain ymp) (Pseudomonas mendocina).